We begin with the raw amino-acid sequence, 86 residues long: Large ribosomal subunit protein bL31B (86 aa).

It belongs to the bacterial ribosomal protein bL31 family. Type B subfamily. As to quaternary structure, part of the 50S ribosomal subunit.

The protein is Large ribosomal subunit protein bL31B of Salmonella agona (strain SL483).